We begin with the raw amino-acid sequence, 595 residues long: MEFCDESYDLVNIDEFDALWVASRHGVAFGVPPCLLISDDDAIARSSIELKSGPSSSNLSPSTLSTEKTSSDSSGVICDPQLHETWREGLGKFPAKEHARKVARELGADHGIIFLLGQDEKYYEDSDMGPTFRQRRYFYYITGADFPGCAVTYDILRDKLVLWIPRIEPRTVLWFGKVPTPEECKAASDVDSVYYIDFLHEKQCPVFKRGQTIHVLHPDQIPPELDHLGKFIRIDAVRLKPAMDAARVIKTDYEIALIRRANAVSSAAHKAVLRNIKRFTNEREIDALFRGYCIAHGAPIQSYPVIAASGINASTLHYDDNNQSLKNRQLLILDAGAEVHCYASDITRTIPLPGSFTPLAREIYRLVERMQDECIAQIKPGVRFSALHAHACAVAVTGLLKLGILRGEEEEILARGTVAAFFPHGLGHHVGLEVHDVSGTERLLLNGGPGSGPGSGGGYGCGASTWRGYRLRRRVMTKRESLTPWEVAALWEGAKPEKEKQQERWLLNNVPLDEVEAALTLASSSGARGQKLAPGMVVTVEPGIYFLPRVLEKYWNVGGVRIEDDILVTKKGYENLTTAPKGDEMMKCMGESGLL.

The interval 51–76 (KSGPSSSNLSPSTLSTEKTSSDSSGV) is disordered. Residues 52-66 (SGPSSSNLSPSTLST) are compositionally biased toward low complexity. Asp-334, Asp-345, Glu-541, and Glu-563 together coordinate Mn(2+).

This sequence belongs to the peptidase M24B family. Mn(2+) serves as cofactor.

The catalysed reaction is Release of any N-terminal amino acid, including proline, that is linked to proline, even from a dipeptide or tripeptide.. In terms of biological role, catalyzes the removal of a penultimate prolyl residue from the N-termini of peptides. The polypeptide is Probable Xaa-Pro aminopeptidase CHGG_02942 (Chaetomium globosum (strain ATCC 6205 / CBS 148.51 / DSM 1962 / NBRC 6347 / NRRL 1970) (Soil fungus)).